Consider the following 443-residue polypeptide: Xaa-Pro dipeptidase (443 aa).

Mn(2+) contacts are provided by aspartate 244, aspartate 255, histidine 336, glutamate 381, and glutamate 420.

It belongs to the peptidase M24B family. Bacterial-type prolidase subfamily. Mn(2+) serves as cofactor.

The catalysed reaction is Xaa-L-Pro dipeptide + H2O = an L-alpha-amino acid + L-proline. Functionally, splits dipeptides with a prolyl residue in the C-terminal position. The protein is Xaa-Pro dipeptidase of Stenotrophomonas maltophilia (strain R551-3).